The sequence spans 422 residues: Phospho-N-acetylmuramoyl-pentapeptide-transferase (422 aa).

Helical transmembrane passes span 28–48 (LMAI…FINL), 71–91 (VGVP…PCLL), 95–115 (LHNI…SLGF), 136–156 (IIGQ…SPDV), 211–231 (AGWI…SNGA), 246–266 (AIIG…EFAG), 279–299 (LVIF…YNAY), 313–333 (IGGI…IPIL), and 399–419 (KITV…IITL).

This sequence belongs to the glycosyltransferase 4 family. MraY subfamily. It depends on Mg(2+) as a cofactor.

The protein resides in the cell inner membrane. It catalyses the reaction UDP-N-acetyl-alpha-D-muramoyl-L-alanyl-gamma-D-glutamyl-meso-2,6-diaminopimeloyl-D-alanyl-D-alanine + di-trans,octa-cis-undecaprenyl phosphate = di-trans,octa-cis-undecaprenyl diphospho-N-acetyl-alpha-D-muramoyl-L-alanyl-D-glutamyl-meso-2,6-diaminopimeloyl-D-alanyl-D-alanine + UMP. It functions in the pathway cell wall biogenesis; peptidoglycan biosynthesis. Its function is as follows. Catalyzes the initial step of the lipid cycle reactions in the biosynthesis of the cell wall peptidoglycan: transfers peptidoglycan precursor phospho-MurNAc-pentapeptide from UDP-MurNAc-pentapeptide onto the lipid carrier undecaprenyl phosphate, yielding undecaprenyl-pyrophosphoryl-MurNAc-pentapeptide, known as lipid I. In Bacteroides fragilis (strain ATCC 25285 / DSM 2151 / CCUG 4856 / JCM 11019 / LMG 10263 / NCTC 9343 / Onslow / VPI 2553 / EN-2), this protein is Phospho-N-acetylmuramoyl-pentapeptide-transferase.